A 61-amino-acid chain; its full sequence is UPF0434 protein PST_2635 (61 aa).

This sequence belongs to the UPF0434 family.

In Stutzerimonas stutzeri (strain A1501) (Pseudomonas stutzeri), this protein is UPF0434 protein PST_2635.